The following is a 154-amino-acid chain: UPF0178 protein Glov_0658 (154 aa).

The protein belongs to the UPF0178 family.

The polypeptide is UPF0178 protein Glov_0658 (Trichlorobacter lovleyi (strain ATCC BAA-1151 / DSM 17278 / SZ) (Geobacter lovleyi)).